We begin with the raw amino-acid sequence, 375 residues long: Alpha-2,8-sialyltransferase 8B (375 aa).

At Met-1 to Arg-6 the chain is on the cytoplasmic side. The chain crosses the membrane as a helical; Signal-anchor for type II membrane protein span at residues Ser-7–Ala-23. At Asp-24–Thr-375 the chain is on the lumenal side. Residues Asn-60, Asn-72, Asn-89, and Asn-134 are each glycosylated (N-linked (GlcNAc...) asparagine). 2 disulfides stabilise this stretch: Cys-157-Cys-307 and Cys-171-Cys-371. Residues Asn-162 and Asn-185 each coordinate CMP-N-acetyl-beta-neuraminate. N-linked (GlcNAc...) asparagine glycans are attached at residues Asn-219 and Asn-234. CMP-N-acetyl-beta-neuraminate is bound by residues Thr-294, Thr-295, Gly-296, Trp-316, Tyr-329, and His-330. His-346 functions as the Proton donor/acceptor in the catalytic mechanism.

The protein belongs to the glycosyltransferase 29 family. Autopolysialylated. Autopolysialylation is not a prerequisite for the polysialylation acitity, but enhances the polysialylation acitity.

The protein resides in the golgi apparatus membrane. It localises to the secreted. It is found in the cell membrane. The catalysed reaction is [N-acetyl-alpha-D-neuraminosyl-(2-&gt;8)](n) + CMP-N-acetyl-beta-neuraminate = [N-acetyl-alpha-D-neuraminosyl-(2-&gt;8)](n+1) + CMP + H(+). It functions in the pathway protein modification; protein glycosylation. Its function is as follows. Catalyzes the transfer of a sialic acid from a CMP-linked sialic acid donor onto a terminal alpha-2,3-, alpha-2,6-, or alpha-2,8-linked sialic acid of an N-linked glycan acceptor through alpha-2,8-linkages. Therefore, participates in polysialic acid synthesis on various sialylated N-acetyllactosaminyl oligosaccharides (alpha-2,3-, alpha-2,6-, or alpha-2,8-linked sialic acid), including NCAM1, NCAM1 N-glycans, FETUB N-glycans, and to a lesser extent sialylparagloboside (SPG) and AHSG, which does not require the initial addition of an alpha 2,8-sialic acid. However, does not exhibit sialic acid-polymerase activity. Catalyzes polysialic acid synthesis in the hippocampal on NCAM1 and supports neurite outgrowth. ST8SIA2-mediated polysialylation influences on oligodendrocyte differentiation and may promote the integrity of myelin and axons. This chain is Alpha-2,8-sialyltransferase 8B, found in Mus musculus (Mouse).